Reading from the N-terminus, the 270-residue chain is Checkpoint signal transducer rad24 (270 aa).

Phosphoserine occurs at positions 34 and 66. Residues 242–270 (AAAGGNTEGAQENAPSNAPEGEAEPKADA) form a disordered region.

It belongs to the 14-3-3 family. As to quaternary structure, homodimer. Binds preferentially to mei2 phosphorylated by ran1/pat1. Binds preferentially to cdc25 phosphorylated by srk1 during G2; the interaction is increased during osmotic stress. Interacts with byr2. Interacts with rad25.

It localises to the cytoplasm. Acts in cell cycle and stress checkpoint signaling by sequestering signal transducers regulated by the checkpoints. Required for the DNA damage checkpoint that ensures that DNA damage is repaired before mitosis is attempted. During environmental stress, sequesters srk1-phosphorylated cdc25 in the cytoplasm to delay the G2/M transition. Sequesters byr2 in the cytoplasm to prevent its translocation to the plasma membrane. Sequesters ran1/pat1-phosphorylated mei2 from its non-coding RNA activators (including meiRNA), to prevent meiotic induction in vegetative cells and to regulate meiosis I. The protein is Checkpoint signal transducer rad24 of Schizosaccharomyces pombe (strain 972 / ATCC 24843) (Fission yeast).